Reading from the N-terminus, the 478-residue chain is F-box/kelch-repeat protein At1g51550 (478 aa).

The tract at residues 1-20 is disordered; that stretch reads MAAESTRNSSPPSTSQSSSP. The span at 9–20 shows a compositional bias: low complexity; the sequence is SSPPSTSQSSSP. In terms of domain architecture, F-box spans 18–64; sequence SSPIINLPDDHLLTILLLLPVDSILSFSMTCKRYKSLACSDSLWEAL. 2 Kelch repeats span residues 135 to 187 and 246 to 299; these read LVLF…VIGE and KMVV…CIRE.

In Arabidopsis thaliana (Mouse-ear cress), this protein is F-box/kelch-repeat protein At1g51550.